The sequence spans 303 residues: tRNA pseudouridine synthase B (303 aa).

The active-site Nucleophile is the aspartate 47.

It belongs to the pseudouridine synthase TruB family. Type 1 subfamily.

The catalysed reaction is uridine(55) in tRNA = pseudouridine(55) in tRNA. Its function is as follows. Responsible for synthesis of pseudouridine from uracil-55 in the psi GC loop of transfer RNAs. The polypeptide is tRNA pseudouridine synthase B (Legionella pneumophila (strain Paris)).